A 1440-amino-acid polypeptide reads, in one-letter code: ABC transporter G family member 46 (1440 aa).

The tract at residues 1 to 42 is disordered; the sequence is MDDDVDAGEIYAVDRQREEGSASAAAFSRSPSTGRVDDDDDD. Residues 21–32 show a composition bias toward low complexity; it reads SASAAAFSRSPS. In terms of domain architecture, ABC transporter 1 spans 137 to 419; the sequence is ANTLHMTTRS…FKSLGFKCLE (283 aa). Residue 170–177 coordinates ATP; that stretch reads GSPGSGKT. The 214-residue stretch at 497–710 folds into the ABC transmembrane type-2 1 domain; it reads KILKANIDRE…ALNALAVNEF (214 aa). Transmembrane regions (helical) follow at residues 516–536, 561–581, 603–623, 634–654, 659–679, 688–708, and 745–765; these read LYIF…SVFI, AIMF…PVFF, TPIS…VIGF, FLVL…IAAL, VVAS…SGFI, WLIW…LAVN, and IGLG…TICL. The tract at residues 794-829 is disordered; that stretch reads DQEPSSGGRVTNDKRYTEGGNNDEATSSNANHNSSP. The span at 812–829 shows a compositional bias: polar residues; that stretch reads GGNNDEATSSNANHNSSP. Residues 843–1095 form the ABC transporter 2 domain; sequence MTFEDIRYSI…ELIKYFESIE (253 aa). An ATP-binding site is contributed by 888 to 895; the sequence is GISGAGKT. One can recognise an ABC transmembrane type-2 2 domain in the interval 1168-1382; sequence IQCLACLWKQ…TINGLVTSQF (215 aa). 7 helical membrane-spanning segments follow: residues 1188–1208, 1219–1236, 1271–1291, 1302–1322, 1332–1352, 1357–1377, and 1410–1430; these read IAVN…MFWG, LLSA…LGVQ, VVVE…IVYS, FFWY…YGMM, MSSI…GFLI, IPIW…INGL, and LWVA…LFGF.

Belongs to the ABC transporter superfamily. ABCG family. PDR (TC 3.A.1.205) subfamily.

It is found in the membrane. May be a general defense protein. In Oryza sativa subsp. japonica (Rice), this protein is ABC transporter G family member 46.